A 433-amino-acid chain; its full sequence is Cell division control protein KAR1 (433 aa).

3 disordered regions span residues 1 to 38 (MNVTSPKDGNHSFSKKNRFNTNKPRFHKLNEQAQSINL), 69 to 101 (TKNINSDSDRSNDTIKQNNYNKRETGYNPFYNG), and 207 to 227 (KPLPLPYLNSPNSDSTPTLQR). The residue at position 233 (Thr233) is a Phosphothreonine.

In terms of assembly, interacts with SPC72.

Its subcellular location is the cytoplasm. The protein localises to the cytoskeleton. It localises to the microtubule organizing center. The protein resides in the spindle pole body. Its function is as follows. KAR1 is required for function of both intranuclear and extranuclear microtubules. KAR1 helps localize CDC31 to the spindle pole body (SPB), CDC31 then initiates SPB duplication via interaction with a downstream effector. The polypeptide is Cell division control protein KAR1 (KAR1) (Saccharomyces cerevisiae (strain ATCC 204508 / S288c) (Baker's yeast)).